Reading from the N-terminus, the 151-residue chain is 6,7-dimethyl-8-ribityllumazine synthase (151 aa).

5-amino-6-(D-ribitylamino)uracil-binding positions include phenylalanine 18, 49–51, and 74–76; these read ALE and CVI. (2S)-2-hydroxy-3-oxobutyl phosphate is bound at residue 79 to 80; the sequence is ET. Histidine 82 (proton donor) is an active-site residue. Asparagine 107 is a binding site for 5-amino-6-(D-ribitylamino)uracil. Residue arginine 121 coordinates (2S)-2-hydroxy-3-oxobutyl phosphate.

Belongs to the DMRL synthase family.

It carries out the reaction (2S)-2-hydroxy-3-oxobutyl phosphate + 5-amino-6-(D-ribitylamino)uracil = 6,7-dimethyl-8-(1-D-ribityl)lumazine + phosphate + 2 H2O + H(+). The protein operates within cofactor biosynthesis; riboflavin biosynthesis; riboflavin from 2-hydroxy-3-oxobutyl phosphate and 5-amino-6-(D-ribitylamino)uracil: step 1/2. Its function is as follows. Catalyzes the formation of 6,7-dimethyl-8-ribityllumazine by condensation of 5-amino-6-(D-ribitylamino)uracil with 3,4-dihydroxy-2-butanone 4-phosphate. This is the penultimate step in the biosynthesis of riboflavin. This is 6,7-dimethyl-8-ribityllumazine synthase from Bartonella tribocorum (strain CIP 105476 / IBS 506).